A 133-amino-acid polypeptide reads, in one-letter code: Phosphoribosyl-AMP cyclohydrolase (133 aa).

Asp82 lines the Mg(2+) pocket. Cys83 is a binding site for Zn(2+). 2 residues coordinate Mg(2+): Asp84 and Asp86. Zn(2+)-binding residues include Cys100 and Cys107.

Belongs to the PRA-CH family. Homodimer. The cofactor is Mg(2+). It depends on Zn(2+) as a cofactor.

The protein localises to the cytoplasm. It catalyses the reaction 1-(5-phospho-beta-D-ribosyl)-5'-AMP + H2O = 1-(5-phospho-beta-D-ribosyl)-5-[(5-phospho-beta-D-ribosylamino)methylideneamino]imidazole-4-carboxamide. It functions in the pathway amino-acid biosynthesis; L-histidine biosynthesis; L-histidine from 5-phospho-alpha-D-ribose 1-diphosphate: step 3/9. Its function is as follows. Catalyzes the hydrolysis of the adenine ring of phosphoribosyl-AMP. In Aromatoleum aromaticum (strain DSM 19018 / LMG 30748 / EbN1) (Azoarcus sp. (strain EbN1)), this protein is Phosphoribosyl-AMP cyclohydrolase.